The sequence spans 476 residues: Arginine biosynthesis bifunctional protein ArgJ, mitochondrial (476 aa).

Residues T204, K233, T244, E331, N471, and T476 each coordinate substrate. T244 (nucleophile) is an active-site residue.

It belongs to the ArgJ family. Heterodimer of an alpha and a beta chain. The alpha and beta chains are autoproteolytically processed from a single precursor protein within the mitochondrion.

It localises to the mitochondrion matrix. The enzyme catalyses N(2)-acetyl-L-ornithine + L-glutamate = N-acetyl-L-glutamate + L-ornithine. It catalyses the reaction L-glutamate + acetyl-CoA = N-acetyl-L-glutamate + CoA + H(+). The protein operates within amino-acid biosynthesis; L-arginine biosynthesis; L-ornithine and N-acetyl-L-glutamate from L-glutamate and N(2)-acetyl-L-ornithine (cyclic): step 1/1. It participates in amino-acid biosynthesis; L-arginine biosynthesis; N(2)-acetyl-L-ornithine from L-glutamate: step 1/4. Its function is as follows. Catalyzes two activities which are involved in the cyclic version of arginine biosynthesis: the synthesis of acetylglutamate from glutamate and acetyl-CoA, and of ornithine by transacetylation between acetylornithine and glutamate. The protein is Arginine biosynthesis bifunctional protein ArgJ, mitochondrial of Arthroderma otae (strain ATCC MYA-4605 / CBS 113480) (Microsporum canis).